Here is a 625-residue protein sequence, read N- to C-terminus: ATP-binding cassette sub-family F member 2 (625 aa).

Positions 1 to 54 are disordered; sequence MPSDLAKKKAAKKKEAAKARQRPRKGHEENGDAITEPQVAEERNEEANGRETTE. The segment covering 40 to 54 has biased composition (basic and acidic residues); sequence AEERNEEANGRETTE. ABC transporter domains follow at residues 88 to 327 and 398 to 615; these read AHII…ENQM and IMVQ…VGEE. An ATP-binding site is contributed by 120–127; that stretch reads GLNGIGKS. Phosphothreonine is present on Thr-220. Lys-306 bears the N6-acetyllysine mark. 432–439 lines the ATP pocket; that stretch reads GPNGAGKS. Position 514 is a phosphoserine (Ser-514).

This sequence belongs to the ABC transporter superfamily. ABCF family. EF3 subfamily.

In Bos taurus (Bovine), this protein is ATP-binding cassette sub-family F member 2 (ABCF2).